The primary structure comprises 192 residues: DNA dC-&gt;dU-editing enzyme APOBEC-3Ca (192 aa).

A CMP/dCMP-type deaminase domain is found at 15 to 141; sequence IDPNTFRFHF…PNYQEGLCKL (127 aa). A Zn(2+)-binding site is contributed by His-69. Glu-71 (proton donor) is an active-site residue. Cys-100 and Cys-103 together coordinate Zn(2+).

This sequence belongs to the cytidine and deoxycytidylate deaminase family. In terms of assembly, (Microbial infection) Interacts with feline foamy virus protein Bet. This interaction does not induce APOBEC3Ca degradation but prevents its dimerization and incorporation into the virion. It depends on Zn(2+) as a cofactor.

Its subcellular location is the nucleus. It localises to the cytoplasm. The catalysed reaction is a 2'-deoxycytidine in single-stranded DNA + H2O + H(+) = a 2'-deoxyuridine in single-stranded DNA + NH4(+). Functionally, DNA deaminase (cytidine deaminase) which acts as an inhibitor of retrovirus replication and retrotransposon mobility via deaminase-dependent and -independent mechanisms. Selectively targets single-stranded DNA and does not deaminate double-stranded DNA or single- or double-stranded RNA. Does not reduce infectivity of foamy feline virus, feline immunodeficiency virus or feline leukemia virus. The sequence is that of DNA dC-&gt;dU-editing enzyme APOBEC-3Ca from Felis catus (Cat).